The chain runs to 498 residues: Lysine--tRNA ligase (498 aa).

The Mg(2+) site is built by E408 and E415.

It belongs to the class-II aminoacyl-tRNA synthetase family. In terms of assembly, homodimer. Requires Mg(2+) as cofactor.

The protein resides in the cytoplasm. It carries out the reaction tRNA(Lys) + L-lysine + ATP = L-lysyl-tRNA(Lys) + AMP + diphosphate. The protein is Lysine--tRNA ligase of Listeria monocytogenes serovar 1/2a (strain ATCC BAA-679 / EGD-e).